A 325-amino-acid polypeptide reads, in one-letter code: Elongation factor P--(R)-beta-lysine ligase (325 aa).

76–78 provides a ligand contact to substrate; the sequence is SPE. ATP contacts are provided by residues 100–102 and Asn109; that span reads RNE. Tyr118 provides a ligand contact to substrate. An ATP-binding site is contributed by 244–245; the sequence is EL. Glu251 serves as a coordination point for substrate. Gly300 lines the ATP pocket.

It belongs to the class-II aminoacyl-tRNA synthetase family. EpmA subfamily. Homodimer.

It catalyses the reaction D-beta-lysine + L-lysyl-[protein] + ATP = N(6)-((3R)-3,6-diaminohexanoyl)-L-lysyl-[protein] + AMP + diphosphate + H(+). In terms of biological role, with EpmB is involved in the beta-lysylation step of the post-translational modification of translation elongation factor P (EF-P) on 'Lys-34'. Catalyzes the ATP-dependent activation of (R)-beta-lysine produced by EpmB, forming a lysyl-adenylate, from which the beta-lysyl moiety is then transferred to the epsilon-amino group of EF-P 'Lys-34'. In Salmonella choleraesuis (strain SC-B67), this protein is Elongation factor P--(R)-beta-lysine ligase.